A 225-amino-acid chain; its full sequence is RNA chaperone ProQ (225 aa).

The interval 107–169 (KARVQAQRAA…VAAKAPREER (63 aa)) is disordered. The segment covering 109–118 (RVQAQRAAQQ) has biased composition (low complexity). Residues 137–146 (RERKPRPQQP) show a composition bias toward basic residues. Basic and acidic residues predominate over residues 147-156 (RRKEGAEQRK).

It belongs to the ProQ family.

The protein resides in the cytoplasm. Functionally, RNA chaperone with significant RNA binding, RNA strand exchange and RNA duplexing activities. May regulate ProP activity through an RNA-based, post-transcriptional mechanism. The polypeptide is RNA chaperone ProQ (Klebsiella pneumoniae subsp. pneumoniae (strain ATCC 700721 / MGH 78578)).